We begin with the raw amino-acid sequence, 635 residues long: Threonine--tRNA ligase (635 aa).

Residues 1 to 144 (MQLLLIHSDY…RSIRPEGTQR (144 aa)) form an editing domain region. The interval 215–514 (PHVELMRRLE…TEEGKVPMLP (300 aa)) is catalytic. Residues Cys-307, His-359, and His-483 each coordinate Zn(2+).

Belongs to the class-II aminoacyl-tRNA synthetase family. As to quaternary structure, homodimer. It depends on Zn(2+) as a cofactor.

It localises to the cytoplasm. The catalysed reaction is tRNA(Thr) + L-threonine + ATP = L-threonyl-tRNA(Thr) + AMP + diphosphate + H(+). Functionally, catalyzes the attachment of threonine to tRNA(Thr) in a two-step reaction: L-threonine is first activated by ATP to form Thr-AMP and then transferred to the acceptor end of tRNA(Thr). Also edits incorrectly charged L-seryl-tRNA(Thr). This is Threonine--tRNA ligase from Methanosarcina barkeri (strain Fusaro / DSM 804).